The primary structure comprises 366 residues: Cobalt-precorrin-5B C(1)-methyltransferase (366 aa).

It belongs to the CbiD family.

The catalysed reaction is Co-precorrin-5B + S-adenosyl-L-methionine = Co-precorrin-6A + S-adenosyl-L-homocysteine. It participates in cofactor biosynthesis; adenosylcobalamin biosynthesis; cob(II)yrinate a,c-diamide from sirohydrochlorin (anaerobic route): step 6/10. In terms of biological role, catalyzes the methylation of C-1 in cobalt-precorrin-5B to form cobalt-precorrin-6A. This Thermoanaerobacter sp. (strain X514) protein is Cobalt-precorrin-5B C(1)-methyltransferase.